The following is a 737-amino-acid chain: Dipeptidyl peptidase 3 (737 aa).

Alanine 2 is subject to N-acetylalanine. Histidine 450 is a binding site for Zn(2+). The active site involves glutamate 451. Residues histidine 455 and glutamate 508 each coordinate Zn(2+).

The protein belongs to the peptidase M49 family. Zn(2+) is required as a cofactor. In terms of tissue distribution, detected in placenta (at protein level). Detected in erythrocytes (at protein level).

It is found in the cytoplasm. Its subcellular location is the cytosol. It carries out the reaction Release of an N-terminal dipeptide from a peptide comprising four or more residues, with broad specificity. Also acts on dipeptidyl 2-naphthylamides.. Its activity is regulated as follows. Activated by Co(2+). Inhibited by EDTA and o-phenanthroline (in vitro). Cleaves and degrades bioactive peptides, including angiotensin, Leu-enkephalin and Met-enkephalin. Also cleaves Arg-Arg-beta-naphthylamide (in vitro). This chain is Dipeptidyl peptidase 3 (DPP3), found in Homo sapiens (Human).